The chain runs to 562 residues: Oxygen-dependent choline dehydrogenase (562 aa).

4–33 (DYIIIGAGSAGNVLATRLTEDPNTTVLLLE) contacts FAD. Residue His-473 is the Proton acceptor of the active site.

Belongs to the GMC oxidoreductase family. FAD is required as a cofactor.

It carries out the reaction choline + A = betaine aldehyde + AH2. The enzyme catalyses betaine aldehyde + NAD(+) + H2O = glycine betaine + NADH + 2 H(+). The protein operates within amine and polyamine biosynthesis; betaine biosynthesis via choline pathway; betaine aldehyde from choline (cytochrome c reductase route): step 1/1. Involved in the biosynthesis of the osmoprotectant glycine betaine. Catalyzes the oxidation of choline to betaine aldehyde and betaine aldehyde to glycine betaine at the same rate. The chain is Oxygen-dependent choline dehydrogenase from Escherichia coli O45:K1 (strain S88 / ExPEC).